The sequence spans 210 residues: Outer surface protein C (210 aa).

A signal peptide spans 1–18 (MKKNTLSAILMTLFLFIS). A lipid anchor (N-palmitoyl cysteine) is attached at cysteine 19. Residue cysteine 19 is the site of S-diacylglycerol cysteine attachment.

This sequence belongs to the OspC lipoprotein family. Homodimer. Binds human plasminogen on the bacterial surface, also binds human plasmin. Interacts with tick I.ricinus salivary protein Iric-1. Interacts with human complement C4 beta chain (C4B); whole bacteria bind to wells coated with C4b. Binding is inhibited by human complement factor C2.

The protein localises to the cell outer membrane. The protein resides in the cell surface. Functionally, a major immunodominant protein in mammalian hosts. Required for the initial stages of mammalian infection. Interaction with tick I.ricinus salivary protein Salp15 protects the bacteria from antibody-mediated killing in vitro and in vivo. Inhibits macrophage-mediated phagocytosis of the bacteria. Binds human plasminogen; this probably confers an extracellular protease activity on the bacteria that allows it to traverse tissue. Binds human complement C4-B, which may inhibit the complement cascade. Experiments in mice suggest it may play another role after initial infection. This is Outer surface protein C from Borreliella burgdorferi (strain ATCC 35210 / DSM 4680 / CIP 102532 / B31) (Borrelia burgdorferi).